The chain runs to 327 residues: Vacuolar protein sorting-associated protein 26A (327 aa).

The interval 306–327 (RTNFHQRFESPESQASAEQPEM) is disordered. S315 is subject to Phosphoserine. Positions 316 to 327 (PESQASAEQPEM) are enriched in polar residues.

The protein belongs to the VPS26 family. Component of the heterotrimeric retromer cargo-selective complex (CSC), also described as vacuolar protein sorting subcomplex (VPS), formed by VPS26 (VPS26A or VPS26B), VPS29 and VPS35. The CSC has a highly elongated structure with VPS26 and VPS29 binding independently at opposite distal ends of VPS35 as central platform. The CSC is believed to associate with variable sorting nexins to form functionally distinct retromer complex variants. The originally described retromer complex (also called SNX-BAR retromer) is a pentamer containing the CSC and a heterodimeric membrane-deforming subcomplex formed between SNX1 or SNX2 and SNX5 or SNX6 (also called SNX-BAR subcomplex); the respective CSC and SNX-BAR subcomplexes associate with low affinity. The CSC associates with SNX3 to form a SNX3-retromer complex. The CSC associates with SNX27, the WASH complex and the SNX-BAR subcomplex to form the SNX27-retromer complex. Interacts with VPS29, VPS35, SNX1, SNX2, SNX5, SNX6, SNX3, SNX27, RAB7A, ECPAS, EHD1, WASHC5, SORL1.

It is found in the cytoplasm. The protein localises to the endosome membrane. Its subcellular location is the early endosome. Its function is as follows. Acts as a component of the retromer cargo-selective complex (CSC). The CSC is believed to be the core functional component of retromer or respective retromer complex variants acting to prevent missorting of selected transmembrane cargo proteins into the lysosomal degradation pathway. The recruitment of the CSC to the endosomal membrane involves RAB7A and SNX3. The SNX-BAR retromer mediates retrograde transport of cargo proteins from endosomes to the trans-Golgi network (TGN) and is involved in endosome-to-plasma membrane transport for cargo protein recycling. The SNX3-retromer mediates the retrograde endosome-to-TGN transport of WLS distinct from the SNX-BAR retromer pathway. The SNX27-retromer is believed to be involved in endosome-to-plasma membrane trafficking and recycling of a broad spectrum of cargo proteins. The CSC seems to act as recruitment hub for other proteins, such as the WASH complex and TBC1D5. Required for retrograde transport of lysosomal enzyme receptor IGF2R. Required to regulate transcytosis of the polymeric immunoglobulin receptor (pIgR-pIgA). Required for the endosomal localization of WASHC2A (indicative for the WASH complex). Required for the endosomal localization of TBC1D5. Mediates retromer cargo recognition of SORL1 and is involved in trafficking of SORL1 implicated in sorting and processing of APP. Involved in retromer-independent lysosomal sorting of F2R. Involved in recycling of ADRB2. Enhances the affinity of SNX27 for PDZ-binding motifs in cargo proteins. In Homo sapiens (Human), this protein is Vacuolar protein sorting-associated protein 26A.